Consider the following 304-residue polypeptide: Glycine--tRNA ligase alpha subunit (304 aa).

It belongs to the class-II aminoacyl-tRNA synthetase family. As to quaternary structure, tetramer of two alpha and two beta subunits.

Its subcellular location is the cytoplasm. The catalysed reaction is tRNA(Gly) + glycine + ATP = glycyl-tRNA(Gly) + AMP + diphosphate. This chain is Glycine--tRNA ligase alpha subunit, found in Afipia carboxidovorans (strain ATCC 49405 / DSM 1227 / KCTC 32145 / OM5) (Oligotropha carboxidovorans).